We begin with the raw amino-acid sequence, 437 residues long: Enolase (437 aa).

Q162 contributes to the (2R)-2-phosphoglycerate binding site. E204 serves as the catalytic Proton donor. Positions 251, 297, and 324 each coordinate Mg(2+). 4 residues coordinate (2R)-2-phosphoglycerate: K349, R378, S379, and K400. K349 acts as the Proton acceptor in catalysis.

Belongs to the enolase family. Mg(2+) is required as a cofactor.

The protein localises to the cytoplasm. Its subcellular location is the secreted. The protein resides in the cell surface. It carries out the reaction (2R)-2-phosphoglycerate = phosphoenolpyruvate + H2O. The protein operates within carbohydrate degradation; glycolysis; pyruvate from D-glyceraldehyde 3-phosphate: step 4/5. Its function is as follows. Catalyzes the reversible conversion of 2-phosphoglycerate (2-PG) into phosphoenolpyruvate (PEP). It is essential for the degradation of carbohydrates via glycolysis. The polypeptide is Enolase (Prosthecochloris aestuarii (strain DSM 271 / SK 413)).